Consider the following 67-residue polypeptide: Large ribosomal subunit protein uL30 (67 aa).

It belongs to the universal ribosomal protein uL30 family. As to quaternary structure, part of the 50S ribosomal subunit.

In Thermotoga neapolitana (strain ATCC 49049 / DSM 4359 / NBRC 107923 / NS-E), this protein is Large ribosomal subunit protein uL30.